Reading from the N-terminus, the 440-residue chain is MLLPGHPRPPPAPQSAQNQGLRRQVEPPGQLLRLFYCTVLVCSKETSALTDFSGYLTKLLQNHTAYACDGDYLNLQCPRHSTISVQSAFYGQDYQMCSSQEPISQREDNLTCVASTTLQKVLDECQNQRACHLLVNSRVFGPDLCPGSSKYLLVSFKCQPNELKNKTVCENQELKLHCHESKFLNIYSAAYGRRTQQRDICSSGAELLPPFDCLSYTALQVLSRRCYGKQRCKVLVDNYHFGSPCLPGVKKYLTVAYACVPKNILTAVDPAVANLNPSLKKDDEHGITFNPSGSRVVRKDGVIVSNSLAAFAYIRAHPERAALLFMSSVCIGLLLTLCALVIRVSCTKDFRELRQGREHLVLGSDKAEEDSEEDLEEEDSSDSQFPEELSRFCRTSYPAYSSIEAAELAERIERREQVIQEIWMNSGLDSSLPRNVGHFY.

Over residues Met-1–Pro-13 the composition is skewed to pro residues. Residues Met-1–Arg-23 form a disordered region. An N-terminal signal peptide occupies residues Met-1–Ala-48. At Leu-49 to Ala-321 the chain is on the extracellular side. Residues Asn-62, Asn-109, and Asn-165 are each glycosylated (N-linked (GlcNAc...) asparagine). The 93-residue stretch at Ala-67 to Gln-159 folds into the SUEL-type lectin 1 domain. In terms of domain architecture, SUEL-type lectin 2 spans Val-168 to Val-260. The chain crosses the membrane as a helical span at residues Ala-322 to Ile-342. The Cytoplasmic portion of the chain corresponds to Arg-343–Tyr-440. Residues Ser-364–Gln-384 are disordered. Positions Ala-367–Ser-381 are enriched in acidic residues.

It belongs to the EVA1 family. As to expression, ubiquitous.

Its subcellular location is the cell membrane. Binds heparin. The chain is Protein eva-1 homolog C (Eva1c) from Mus musculus (Mouse).